The primary structure comprises 264 residues: Glutamate racemase (264 aa).

Residues 10-11 (DS) and 42-43 (YG) each bind substrate. Cys-73 (proton donor/acceptor) is an active-site residue. Residue 74–75 (NT) participates in substrate binding. The active-site Proton donor/acceptor is the Cys-181. 182–183 (TH) is a binding site for substrate.

It belongs to the aspartate/glutamate racemases family.

It catalyses the reaction L-glutamate = D-glutamate. It functions in the pathway cell wall biogenesis; peptidoglycan biosynthesis. In terms of biological role, provides the (R)-glutamate required for cell wall biosynthesis. This chain is Glutamate racemase, found in Thermoanaerobacter pseudethanolicus (strain ATCC 33223 / 39E) (Clostridium thermohydrosulfuricum).